Reading from the N-terminus, the 195-residue chain is Imidazoleglycerol-phosphate dehydratase (195 aa).

Belongs to the imidazoleglycerol-phosphate dehydratase family.

Its subcellular location is the cytoplasm. It catalyses the reaction D-erythro-1-(imidazol-4-yl)glycerol 3-phosphate = 3-(imidazol-4-yl)-2-oxopropyl phosphate + H2O. The protein operates within amino-acid biosynthesis; L-histidine biosynthesis; L-histidine from 5-phospho-alpha-D-ribose 1-diphosphate: step 6/9. This Paraburkholderia xenovorans (strain LB400) protein is Imidazoleglycerol-phosphate dehydratase.